Consider the following 607-residue polypeptide: MPRIHVLPPGLVNQIAAGEVVERPASIVKELVENALDAGATSVGVDVEEGGLALVRVADDGSGMDRDDALLALERHATSKLRDAEGLAAIGTMGFRGEAVPAIASVSRFRLDTSAGEDGAGTRVEIEGGVLGEVAPVARPRGTTVEVRDLFFNTPARRKFMRAASTEAGHVSEAVIRLALARPDVGFTLRSAGRLVLGARAGGGLADRAGQALGREAHRHLLPVDARRGEVRVHGLICSPDHSEATGRALYLFVNGRYVRDRAAAHAVLRAFAGTLPPGRHPAGVLFVELPLHRVDVNVHPQKLEVRFAEGREVFDALFHTVAGALRTAPWLRARPQPGDGVPAGNGGGPAPVPVAGEEAAEVLAWARAARPPEGSGATLVQPAPGAWATGRLAFPVAPAPGAGPEAGPRPEGYFAALRYVGQHARTYLLCEAPGGTLVVIDQHASHERMLFHRLREAFRARRIPVQPFLLPQVVTLPPAAARALEAGLAELGRLGFDAEPFGGEAFAVKGAPAALAGVDLTALLTDLGSQLAEVERGSAVDDAFHDLLATMACHAAVRANQDVSPEEARALLDGLDAIDFKARCPHGRPVVFELSLADLERRVGRR.

Belongs to the DNA mismatch repair MutL/HexB family.

This protein is involved in the repair of mismatches in DNA. It is required for dam-dependent methyl-directed DNA mismatch repair. May act as a 'molecular matchmaker', a protein that promotes the formation of a stable complex between two or more DNA-binding proteins in an ATP-dependent manner without itself being part of a final effector complex. The chain is DNA mismatch repair protein MutL from Anaeromyxobacter dehalogenans (strain 2CP-1 / ATCC BAA-258).